The sequence spans 368 residues: Agmatine deiminase (368 aa).

Cysteine 357 acts as the Amidino-cysteine intermediate in catalysis.

This sequence belongs to the agmatine deiminase family. In terms of assembly, homodimer.

The enzyme catalyses agmatine + H2O = N-carbamoylputrescine + NH4(+). The protein operates within amine and polyamine biosynthesis; putrescine biosynthesis via agmatine pathway; N-carbamoylputrescine from agmatine: step 1/1. Functionally, mediates the hydrolysis of agmatine into N-carbamoylputrescine in the arginine decarboxylase (ADC) pathway of putrescine biosynthesis, a basic polyamine. This chain is Agmatine deiminase, found in Pseudomonas putida (strain ATCC 700007 / DSM 6899 / JCM 31910 / BCRC 17059 / LMG 24140 / F1).